The chain runs to 300 residues: 2-methylisocitrate lyase (300 aa).

53 to 55 (SGD) serves as a coordination point for substrate. Mg(2+) contacts are provided by D92 and D94. Substrate is bound by residues 129-130 (CG), R162, E192, 214-216 (NMT), R245, and R274.

Belongs to the isocitrate lyase/PEP mutase superfamily. Methylisocitrate lyase family. Mg(2+) serves as cofactor.

The catalysed reaction is 3-hydroxybutane-1,2,3-tricarboxylate = pyruvate + succinate. In terms of biological role, involved in the methylcitric acid cycle. Catalyzes the cleavage of 2-methylisocitrate to yield pyruvate and succinate. In Halalkalibacterium halodurans (strain ATCC BAA-125 / DSM 18197 / FERM 7344 / JCM 9153 / C-125) (Bacillus halodurans), this protein is 2-methylisocitrate lyase.